Consider the following 771-residue polypeptide: MATLGDIGVAAAINILTAIIFLLAFAILRIQPFNDRVYFPKWYLKGIRSSPLHSGALVSKFVNVNLGSYLRFLNWMPAALKMPEPELIDHAGLDSAVYLRIYLIGLKIFVPIALLAWSILVPVNWTSHGLQLAKLRNVTSSDIDKLSISNIENGSDRFWTHLVMAYAFTFWTCYVLMKEYEKVAAMRLAFLQNEQRRPDQFTVLVRNVPADPDESISDSVEHFFLVNHPDHYLTHQVVYNANDLAALVEQKKSTQNWLDYYQLKYTRNQEHKPRIKTGFLGLWGKKVDAIDHYIAEIEKLNEQIMEERKKVKKDDTSVMPAAFVSFKTRWGAAVSAQTQQSSDPTEWLTEWAPEAREVFWSNLAIPYVSLTVRRLIMHIAFFFLTFFFMIPIAFVQSLASIEGIEKNAPFLKSIIENDLFKSVIQGFLPGIVLKLFLIFLPSILMVMSKFEGFVSLSSLERRAAFRYYIFNLINVFLGSVITGSAFEQLDSFLKQSAKEIPKTVGVAIPIKATFFITYIMVDGWAGIAGEILRLKPLIFFHIKNSLLVKTEKDREEAMNPGQINYHATEPRIQLYFLLGLVYAPVTPVLLPFIIIFFALAYLVFRHQIINVYNQEYESAARFWPDVHGRIISALIIAQILLMGLLSTKGAAQSTPFLLFLPIITFFFHRYCKGRYEPAFLRHPLKEAMVKDTLERAREPNFNLKPYLQKAYIHPVFKDNDYEDSRFDEISGYCIEDSDEECVTVPTKRQSRINTPAVSHASRGSSRSPPSK.

Residues 7–27 (IGVAAAINILTAIIFLLAFAI) form a helical membrane-spanning segment. Ser54 carries the phosphoserine modification. 9 consecutive transmembrane segments (helical) span residues 101 to 121 (IYLI…SILV), 158 to 178 (FWTH…VLMK), 375 to 395 (LIMH…IAFV), 427 to 447 (FLPG…LMVM), 467 to 487 (YYIF…SAFE), 512 to 532 (ATFF…GEIL), 584 to 604 (PVTP…YLVF), 630 to 650 (IISA…TKGA), and 651 to 671 (AQST…HRYC). A disordered region spans residues 744-771 (VPTKRQSRINTPAVSHASRGSSRSPPSK). Positions 751–771 (RINTPAVSHASRGSSRSPPSK) are enriched in polar residues.

The protein belongs to the CSC1 (TC 1.A.17) family. Phosphorylated at Ser-54 by BIK1 in response to pathogen-associated molecular pattern (PAMP) perception, promoting its activation. Preferentially expressed in guard cells.

The protein localises to the cell membrane. The catalysed reaction is Ca(2+)(in) = Ca(2+)(out). Activated following phosphorylation at Ser-54 by BIK1. In terms of biological role, calcium-permeable channel that plays a key role in plant stomatal immunity. In response to pathogen-associated molecular pattern (PAMP) perception, phosphorylated and activated by BIK1, triggering rapid influx of calcium ions across the plasma membrane, leading to stomatal closure. This is Hyperosmolality-gated Ca2+ permeable channel 1.3 from Arabidopsis thaliana (Mouse-ear cress).